The following is a 188-amino-acid chain: Potassium-transporting ATPase KdpC subunit (188 aa).

Residues 13–33 traverse the membrane as a helical segment; the sequence is MTAIFWIGCGLAYPLIFTGFA.

The protein belongs to the KdpC family. As to quaternary structure, the system is composed of three essential subunits: KdpA, KdpB and KdpC.

Its subcellular location is the cell inner membrane. Functionally, part of the high-affinity ATP-driven potassium transport (or Kdp) system, which catalyzes the hydrolysis of ATP coupled with the electrogenic transport of potassium into the cytoplasm. This subunit acts as a catalytic chaperone that increases the ATP-binding affinity of the ATP-hydrolyzing subunit KdpB by the formation of a transient KdpB/KdpC/ATP ternary complex. This Gloeobacter violaceus (strain ATCC 29082 / PCC 7421) protein is Potassium-transporting ATPase KdpC subunit.